We begin with the raw amino-acid sequence, 1123 residues long: Telomerase reverse transcriptase (1123 aa).

Positions 1-230 (MPRAPRCRAV…ARRRRGSPGS (230 aa)) are RNA-interacting domain 1. A GQ motif region spans residues 58–197 (VPWGARPPPA…APGLPGLPGL (140 aa)). A required for regulating specificity for telomeric DNA and for processivity for primer elongation region spans residues 137-141 (WGLLL). The tract at residues 202-311 (AGAGASADLR…GVPHDPAHPE (110 aa)) is disordered. A Bipartite nuclear localization signal motif is present at residues 222–240 (RRRRGSPGSGVPLAKRPRR). Residue Ser227 is modified to Phosphoserine; by PKB/AKT1. The segment at 231 to 308 (GVPLAKRPRR…GPQGVPHDPA (78 aa)) is linker. Positions 260 to 279 (PPVSEAPAVTPAVAASPAAS) are enriched in low complexity. An RNA-interacting domain 2 region spans residues 309–539 (HPETKRFLYC…LARFLVLVDG (231 aa)). Residues 312 to 317 (TKRFLY) carry the TFLY; involved in RNA binding motif. The segment at 360–510 (ARRMRRLPAR…MKVRDCTWLH (151 aa)) is QFP motif. Positions 381 to 401 (LGNHARCPYRALLRTHCPLRA) are CP motif. A Phosphoserine; by DYRK2 modification is found at Ser446. A Reverse transcriptase domain is found at 595–926 (EVRRHREARP…CLFPWCGLLL (332 aa)). Tyr697 is subject to Phosphotyrosine; by SRC-type Tyr-kinases. Mg(2+) is bound by residues Asp702, Asp859, and Asp860. The segment at 905–919 (LGSAAPLQLPAHCLF) is required for oligomerization. The tract at residues 921–925 (WCGLL) is primer grip sequence. The tract at residues 927 to 1123 (DTRTLEVSCD…LTADFKTILD (197 aa)) is CTE.

Belongs to the reverse transcriptase family. Telomerase subfamily. Catalytic component of the telomerase holoenzyme complex composed of one molecule of TERT, one molecule of WRAP53/TCAB1, two molecules of H/ACA ribonucleoprotein complex subunits DKC1, NOP10, NHP2 and GAR1, and a telomerase RNA template component (TERC). The telomerase holoenzyme complex is associated with TEP1, SMG6/EST1A and POT1. The molecular chaperone HSP90/P23 complex is required for correct assembly and stabilization of the active telomerase. Interacts directly with HSP90A and PTGES3. Interacts with HSPA1A; the interaction occurs in the absence of TERC and dissociates once the complex has formed. Interacts with RAN; the interaction promotes nuclear export of TERT. Interacts with XPO1. Interacts with PTPN11; the interaction retains TERT in the nucleus. Interacts with NCL (via RRM1 and C-terminal RRM4/Arg/Gly-rich domains); the interaction is important for nucleolar localization of TERT. Interacts with SMARCA4 (via the bromodomain); the interaction regulates Wnt-mediated signaling. Interacts with MCRS1 (isoform MCRS2); the interaction inhibits in vitro telomerase activity. Interacts with PIF1; the interaction has no effect on the elongation activity of TERT. Interacts with PML; the interaction recruits TERT to PML bodies and inhibits telomerase activity. Interacts with GNL3L. Interacts with isoform 1 and isoform 2 of NVL. Interacts with DHX36. Interacts with ATF7. In terms of processing, phosphorylation at Tyr-697 under oxidative stress leads to translocation of TERT to the cytoplasm and reduces its antiapoptotic activity. Dephosphorylated by SHP2/PTPN11 leading to nuclear retention. Phosphorylation at Ser-227 by the AKT pathway promotes nuclear location. Phosphorylation at the G2/M phase at Ser-446 by DYRK2 promotes ubiquitination by the EDVP complex and degradation. Ubiquitinated by the EDVP complex, a E3 ligase complex following phosphorylation at Ser-446 by DYRK2. Ubiquitinated leads to proteasomal degradation.

It is found in the nucleus. The protein resides in the nucleolus. The protein localises to the nucleoplasm. It localises to the chromosome. Its subcellular location is the telomere. It is found in the cytoplasm. The protein resides in the PML body. It catalyses the reaction DNA(n) + a 2'-deoxyribonucleoside 5'-triphosphate = DNA(n+1) + diphosphate. Telomerase is a ribonucleoprotein enzyme essential for the replication of chromosome termini in most eukaryotes. Active in progenitor and cancer cells. Inactive, or very low activity, in normal somatic cells. Catalytic component of the teleromerase holoenzyme complex whose main activity is the elongation of telomeres by acting as a reverse transcriptase that adds simple sequence repeats to chromosome ends by copying a template sequence within the RNA component of the enzyme. Catalyzes the RNA-dependent extension of 3'-chromosomal termini with the 6-nucleotide telomeric repeat unit, 5'-TTAGGG-3'. The catalytic cycle involves primer binding, primer extension and release of product once the template boundary has been reached or nascent product translocation followed by further extension. More active on substrates containing 2 or 3 telomeric repeats. Telomerase activity is regulated by a number of factors including telomerase complex-associated proteins, chaperones and polypeptide modifiers. Modulates Wnt signaling. Plays important roles in aging and antiapoptosis. The sequence is that of Telomerase reverse transcriptase (TERT) from Canis lupus familiaris (Dog).